A 340-amino-acid chain; its full sequence is Ketol-acid reductoisomerase (NADP(+)) (340 aa).

Residues 2-182 enclose the KARI N-terminal Rossmann domain; it reads AELYYDNQAD…GCTRAGVLRT (181 aa). NADP(+)-binding positions include 25–28, serine 51, serine 53, and 83–86; these read FGSQ and DIGQ. The active site involves histidine 108. Glycine 134 contacts NADP(+). In terms of domain architecture, KARI C-terminal knotted spans 183-328; sequence TFAEETETDL…RELRRMMPFV (146 aa). Mg(2+) contacts are provided by aspartate 191, glutamate 195, glutamate 227, and glutamate 231. Serine 252 is a binding site for substrate.

This sequence belongs to the ketol-acid reductoisomerase family. Mg(2+) is required as a cofactor.

It carries out the reaction (2R)-2,3-dihydroxy-3-methylbutanoate + NADP(+) = (2S)-2-acetolactate + NADPH + H(+). It catalyses the reaction (2R,3R)-2,3-dihydroxy-3-methylpentanoate + NADP(+) = (S)-2-ethyl-2-hydroxy-3-oxobutanoate + NADPH + H(+). It participates in amino-acid biosynthesis; L-isoleucine biosynthesis; L-isoleucine from 2-oxobutanoate: step 2/4. The protein operates within amino-acid biosynthesis; L-valine biosynthesis; L-valine from pyruvate: step 2/4. Functionally, involved in the biosynthesis of branched-chain amino acids (BCAA). Catalyzes an alkyl-migration followed by a ketol-acid reduction of (S)-2-acetolactate (S2AL) to yield (R)-2,3-dihydroxy-isovalerate. In the isomerase reaction, S2AL is rearranged via a Mg-dependent methyl migration to produce 3-hydroxy-3-methyl-2-ketobutyrate (HMKB). In the reductase reaction, this 2-ketoacid undergoes a metal-dependent reduction by NADPH to yield (R)-2,3-dihydroxy-isovalerate. The polypeptide is Ketol-acid reductoisomerase (NADP(+)) (Chloroflexus aurantiacus (strain ATCC 29366 / DSM 635 / J-10-fl)).